A 101-amino-acid chain; its full sequence is Small ribosomal subunit protein uS14 (101 aa).

Positions 36–61 (ASAEDRRAARQKLQSLPRNSSPVRQR) are disordered. Over residues 47–59 (KLQSLPRNSSPVR) the composition is skewed to polar residues.

Belongs to the universal ribosomal protein uS14 family. In terms of assembly, part of the 30S ribosomal subunit. Contacts proteins S3 and S10.

Its function is as follows. Binds 16S rRNA, required for the assembly of 30S particles and may also be responsible for determining the conformation of the 16S rRNA at the A site. This chain is Small ribosomal subunit protein uS14, found in Methylobacillus flagellatus (strain ATCC 51484 / DSM 6875 / VKM B-1610 / KT).